The sequence spans 397 residues: Guanine nucleotide-binding protein G(s) subunit alpha (397 aa).

Residues 1-23 (MGCLGNSKTEDQRNEEKAQREAN) form a disordered region. Glycine 2 is lipidated: N-palmitoyl glycine. Cysteine 3 carries S-palmitoyl cysteine lipidation. Positions 8–23 (KTEDQRNEEKAQREAN) are enriched in basic and acidic residues. The G-alpha domain maps to 39 to 397 (ATHRLLLLGA…RMHLRQYELL (359 aa)). The tract at residues 42 to 55 (RLLLLGAGESGKST) is G1 motif. Residues 47–55 (GAGESGKST), 182–189 (LLRCRVLT), 208–212 (DVGGQ), 277–280 (NKQD), and alanine 369 contribute to the GTP site. Serine 54 and threonine 189 together coordinate Mg(2+). Positions 181-189 (DLLRCRVLT) are G2 motif. The tract at residues 204–213 (FHMFDVGGQR) is G3 motif. Positions 273 to 280 (ILFLNKQD) are G4 motif. The segment at 367–372 (TCAVDT) is G5 motif.

Belongs to the G-alpha family. G(s) subfamily. Heterotrimeric G proteins are composed of 3 units; alpha, beta and gamma. The alpha chain contains the guanine nucleotide binding site. Interacts with CRY1; the interaction may block GPCR-mediated regulation of cAMP concentrations. Interacts with ADCY6 and stimulates its adenylyl cyclase activity. Interacts with ADCY2 and ADCY5. Stimulates the ADCY5 adenylyl cyclase activity. Interaction with SASH1.

The protein localises to the cell membrane. Guanine nucleotide-binding proteins (G proteins) function as transducers in numerous signaling pathways controlled by G protein-coupled receptors (GPCRs). Signaling involves the activation of adenylyl cyclases, resulting in increased levels of the signaling molecule cAMP. GNAS functions downstream of several GPCRs, including beta-adrenergic receptors. Stimulates the Ras signaling pathway via RAPGEF2. The chain is Guanine nucleotide-binding protein G(s) subunit alpha (GNAS) from Sus scrofa (Pig).